The sequence spans 298 residues: MDKNIIIGAMTALITPFKNGKVDEQSYARLIKRQIENGIDAVVPVGTTGESATLTHEEHRTCIEIAVETCKGTKVKVLAGAGSNATHEAVGLAKFAKEHGADGILSVVPYYNKPTQQGLYEHYKAIAQSVDIPVLLYNVPGRTGCEISTDTIIKLFRDCENIYGVKEASGNIDKCVDLLAHEPRMMLISGEDAINYPILSNGGKGVISVTSNLLPDMISALTHFALDENYKEAKKINDELYNINKILFCESNPIPIKTAMYLAGLIESLEFRLPLCSPSKENFAKIEEVMKKYKIKGF.

Thr48 lines the pyruvate pocket. Tyr137 acts as the Proton donor/acceptor in catalysis. The active-site Schiff-base intermediate with substrate is Lys166. Ile207 serves as a coordination point for pyruvate.

It belongs to the DapA family. Homotetramer; dimer of dimers.

The protein resides in the cytoplasm. The enzyme catalyses L-aspartate 4-semialdehyde + pyruvate = (2S,4S)-4-hydroxy-2,3,4,5-tetrahydrodipicolinate + H2O + H(+). Its pathway is amino-acid biosynthesis; L-lysine biosynthesis via DAP pathway; (S)-tetrahydrodipicolinate from L-aspartate: step 3/4. Catalyzes the condensation of (S)-aspartate-beta-semialdehyde [(S)-ASA] and pyruvate to 4-hydroxy-tetrahydrodipicolinate (HTPA). The protein is 4-hydroxy-tetrahydrodipicolinate synthase of Campylobacter jejuni subsp. jejuni serotype O:23/36 (strain 81-176).